Consider the following 215-residue polypeptide: Glutathione S-transferase D6 (215 aa).

Residues 1–80 (MDLYNMSGSP…YLVEQYGKDD (80 aa)) enclose the GST N-terminal domain. Glutathione contacts are provided by residues S9, 50–52 (HTI), and 64–66 (ETR). A GST C-terminal domain is found at 86–206 (DPQKQALINQ…LARIQSAKKF (121 aa)).

The protein belongs to the GST superfamily. Delta family. Homodimer.

It catalyses the reaction RX + glutathione = an S-substituted glutathione + a halide anion + H(+). Its function is as follows. Conjugation of reduced glutathione to a wide number of exogenous and endogenous hydrophobic electrophiles. May be involved in detoxification. The sequence is that of Glutathione S-transferase D6 from Drosophila melanogaster (Fruit fly).